We begin with the raw amino-acid sequence, 179 residues long: tRNA (cytidine(56)-2'-O)-methyltransferase (179 aa).

Residues L82, 112-116, and 130-137 contribute to the S-adenosyl-L-methionine site; these read GAEKV and VGNQPHSE.

The protein belongs to the aTrm56 family. As to quaternary structure, homodimer.

It is found in the cytoplasm. It catalyses the reaction cytidine(56) in tRNA + S-adenosyl-L-methionine = 2'-O-methylcytidine(56) in tRNA + S-adenosyl-L-homocysteine + H(+). In terms of biological role, specifically catalyzes the AdoMet-dependent 2'-O-ribose methylation of cytidine at position 56 in tRNAs. The polypeptide is tRNA (cytidine(56)-2'-O)-methyltransferase (Methanococcus maripaludis (strain DSM 14266 / JCM 13030 / NBRC 101832 / S2 / LL)).